We begin with the raw amino-acid sequence, 354 residues long: UDP-3-O-acylglucosamine N-acyltransferase (354 aa).

His247 functions as the Proton acceptor in the catalytic mechanism.

It belongs to the transferase hexapeptide repeat family. LpxD subfamily. Homotrimer.

It carries out the reaction a UDP-3-O-[(3R)-3-hydroxyacyl]-alpha-D-glucosamine + a (3R)-hydroxyacyl-[ACP] = a UDP-2-N,3-O-bis[(3R)-3-hydroxyacyl]-alpha-D-glucosamine + holo-[ACP] + H(+). The protein operates within bacterial outer membrane biogenesis; LPS lipid A biosynthesis. Catalyzes the N-acylation of UDP-3-O-acylglucosamine using 3-hydroxyacyl-ACP as the acyl donor. Is involved in the biosynthesis of lipid A, a phosphorylated glycolipid that anchors the lipopolysaccharide to the outer membrane of the cell. The protein is UDP-3-O-acylglucosamine N-acyltransferase of Chlamydia trachomatis serovar L2 (strain ATCC VR-902B / DSM 19102 / 434/Bu).